A 198-amino-acid polypeptide reads, in one-letter code: Capsid protein (198 aa).

The protein localises to the virion. The protein is Capsid protein of Vitis vinifera (Grape).